Reading from the N-terminus, the 353-residue chain is MTAILERRESESLWGRFCNWITSTENRLYIGWFGVLMIPTLLTATSVFIIAFIAAPPVDIDGIREPVSGSLLYGNNIVSGAIIPTSAAIGLHFYPIWEAASVDEWLYNGGPYELIVLHFLLGVACYMGREWELSFRLGMRPWIAVAYSAPVAAATAVFLIYPIGQGSFSDGMPLGISGTFNFMIVFQAEHNILMHPFHMLGVAGVFGGSLFSAMHGSLVTSSLIRETTENESANEGYRFGQEEETYNIVAAHGYFGRLIFQYASFNNSRSLHFFLAAWPVVGIWFTALGISTMAFNLNGFNFNQSVVDSQGRVINTWADIINRANLGMEVMHERNAHNFPLDLAAIEAPATNG.

At threonine 2 the chain carries N-acetylthreonine. Threonine 2 carries the post-translational modification Phosphothreonine. 3 helical membrane passes run 29–46 (YIGW…TATS), 118–133 (HFLL…EWEL), and 142–156 (WIAV…AATA). Histidine 118 serves as a coordination point for chlorophyll a. Tyrosine 126 contributes to the pheophytin a binding site. 2 residues coordinate [CaMn4O5] cluster: aspartate 170 and glutamate 189. The chain crosses the membrane as a helical span at residues 197 to 218 (FHMLGVAGVFGGSLFSAMHGSL). Histidine 198 contacts chlorophyll a. Residues histidine 215 and 264 to 265 (SF) each bind a quinone. Histidine 215 provides a ligand contact to Fe cation. Fe cation is bound at residue histidine 272. Residues 274–288 (FLAAWPVVGIWFTAL) traverse the membrane as a helical segment. [CaMn4O5] cluster contacts are provided by histidine 332, glutamate 333, aspartate 342, and alanine 344. The propeptide occupies 345-353 (AIEAPATNG).

The protein belongs to the reaction center PufL/M/PsbA/D family. PSII is composed of 1 copy each of membrane proteins PsbA, PsbB, PsbC, PsbD, PsbE, PsbF, PsbH, PsbI, PsbJ, PsbK, PsbL, PsbM, PsbT, PsbX, PsbY, PsbZ, Psb30/Ycf12, at least 3 peripheral proteins of the oxygen-evolving complex and a large number of cofactors. It forms dimeric complexes. Requires The D1/D2 heterodimer binds P680, chlorophylls that are the primary electron donor of PSII, and subsequent electron acceptors. It shares a non-heme iron and each subunit binds pheophytin, quinone, additional chlorophylls, carotenoids and lipids. D1 provides most of the ligands for the Mn4-Ca-O5 cluster of the oxygen-evolving complex (OEC). There is also a Cl(-1) ion associated with D1 and D2, which is required for oxygen evolution. The PSII complex binds additional chlorophylls, carotenoids and specific lipids. as cofactor. Tyr-161 forms a radical intermediate that is referred to as redox-active TyrZ, YZ or Y-Z. In terms of processing, C-terminally processed by CTPA; processing is essential to allow assembly of the oxygen-evolving complex and thus photosynthetic growth.

Its subcellular location is the plastid membrane. The catalysed reaction is 2 a plastoquinone + 4 hnu + 2 H2O = 2 a plastoquinol + O2. Its function is as follows. Photosystem II (PSII) is a light-driven water:plastoquinone oxidoreductase that uses light energy to abstract electrons from H(2)O, generating O(2) and a proton gradient subsequently used for ATP formation. It consists of a core antenna complex that captures photons, and an electron transfer chain that converts photonic excitation into a charge separation. The D1/D2 (PsbA/PsbD) reaction center heterodimer binds P680, the primary electron donor of PSII as well as several subsequent electron acceptors. The sequence is that of Photosystem II protein D1 from Cuscuta reflexa (Southern Asian dodder).